The chain runs to 112 residues: Large ribosomal subunit protein eL30 (112 aa).

The protein belongs to the eukaryotic ribosomal protein eL30 family.

The chain is Large ribosomal subunit protein eL30 (RPL30) from Euphorbia esula (Leafy spurge).